Here is a 585-residue protein sequence, read N- to C-terminus: Acetolactate synthase large subunit (585 aa).

Glu60 is a binding site for thiamine diphosphate. Residues Arg162, 272–293 (HGTAYANFAVSECDLLIALGAR), and 315–334 (DIDPAEIGKNRIPQLAIISD) each bind FAD. The segment at 407-486 (QHQMWAAQFL…IKIFIINNQW (80 aa)) is thiamine pyrophosphate binding. Asp457 and Asn484 together coordinate Mg(2+).

Belongs to the TPP enzyme family. In terms of assembly, dimer of large and small chains. Requires Mg(2+) as cofactor. The cofactor is thiamine diphosphate.

The protein resides in the plastid. It localises to the chloroplast. The enzyme catalyses 2 pyruvate + H(+) = (2S)-2-acetolactate + CO2. The protein operates within amino-acid biosynthesis; L-isoleucine biosynthesis; L-isoleucine from 2-oxobutanoate: step 1/4. Its pathway is amino-acid biosynthesis; L-valine biosynthesis; L-valine from pyruvate: step 1/4. This chain is Acetolactate synthase large subunit (ilvB), found in Cyanidium caldarium (Red alga).